A 132-amino-acid polypeptide reads, in one-letter code: Translation initiation factor 5A (132 aa).

Hypusine is present on Lys-36.

This sequence belongs to the eIF-5A family.

It is found in the cytoplasm. Functionally, functions by promoting the formation of the first peptide bond. The sequence is that of Translation initiation factor 5A from Methanosphaera stadtmanae (strain ATCC 43021 / DSM 3091 / JCM 11832 / MCB-3).